Here is a 228-residue protein sequence, read N- to C-terminus: Orotate phosphoribosyltransferase (228 aa).

Residues Arg-107, Lys-108, Lys-111, and 133 to 141 (EDLTTDGGS) each bind 5-phospho-alpha-D-ribose 1-diphosphate. Thr-137 contacts orotate.

Belongs to the purine/pyrimidine phosphoribosyltransferase family. PyrE subfamily. In terms of assembly, homodimer. Mg(2+) is required as a cofactor.

The enzyme catalyses orotidine 5'-phosphate + diphosphate = orotate + 5-phospho-alpha-D-ribose 1-diphosphate. Its pathway is pyrimidine metabolism; UMP biosynthesis via de novo pathway; UMP from orotate: step 1/2. Catalyzes the transfer of a ribosyl phosphate group from 5-phosphoribose 1-diphosphate to orotate, leading to the formation of orotidine monophosphate (OMP). This chain is Orotate phosphoribosyltransferase, found in Jannaschia sp. (strain CCS1).